Here is a 930-residue protein sequence, read N- to C-terminus: Protocadherin gamma-B6 (930 aa).

Positions 1-30 are cleaved as a signal peptide; sequence MGGSCAQRRRAGPRQVLFPLLLPLFYPTLS. 6 Cadherin domains span residues 31–133, 134–242, 243–347, 348–452, 453–562, and 570–675; these read EPIR…APQF, DKKE…PPVF, SRDE…SPEI, IITS…APVF, DQTS…APRV, and DGSA…LPDL. Over 31-691 the chain is Extracellular; the sequence is EPIRYSIPEE…SDPQAELQFY (661 aa). N304, N419, and N545 each carry an N-linked (GlcNAc...) asparagine glycan. A helical transmembrane segment spans residues 692–712; the sequence is LVVALALISVLFLLAVILAIA. At 713–930 the chain is on the cytoplasmic side; the sequence is LRLRRSLSPA…KKKSGKKEKK (218 aa). 2 disordered regions span residues 791–839 and 900–930; these read PHGG…WPNN and ATLTNAAGKRDGKAPAGGNGNKKKSGKKEKK. Polar residues predominate over residues 800–839; that stretch reads HPETLTSQAPPNTDWRFSQAQRPGTSGSQNGDDTGTWPNN. The segment covering 920–930 has biased composition (basic residues); the sequence is NKKKSGKKEKK.

The protein resides in the cell membrane. Potential calcium-dependent cell-adhesion protein. May be involved in the establishment and maintenance of specific neuronal connections in the brain. This is Protocadherin gamma-B6 (PCDHGB6) from Homo sapiens (Human).